Consider the following 67-residue polypeptide: Conotoxin Cl6.8 (67 aa).

The first 22 residues, M1–A22, serve as a signal peptide directing secretion. A propeptide spanning residues N23–S39 is cleaved from the precursor. Disulfide bonds link C43–C58, C50–C62, and C57–C66. At C66 the chain carries Cysteine amide.

This sequence belongs to the conotoxin O1 superfamily. In terms of tissue distribution, expressed by the venom duct.

It is found in the secreted. In Californiconus californicus (California cone), this protein is Conotoxin Cl6.8.